Consider the following 938-residue polypeptide: Bifunctional uridylyltransferase/uridylyl-removing enzyme (938 aa).

Residues M1 to L379 are uridylyltransferase. A uridylyl-removing region spans residues D380–A733. The 123-residue stretch at V495 to L617 folds into the HD domain. 2 ACT domains span residues E734 to R813 and V845 to A924.

It belongs to the GlnD family. Mg(2+) is required as a cofactor.

It carries out the reaction [protein-PII]-L-tyrosine + UTP = [protein-PII]-uridylyl-L-tyrosine + diphosphate. It catalyses the reaction [protein-PII]-uridylyl-L-tyrosine + H2O = [protein-PII]-L-tyrosine + UMP + H(+). Its activity is regulated as follows. Uridylyltransferase (UTase) activity is inhibited by glutamine, while glutamine activates uridylyl-removing (UR) activity. Its function is as follows. Modifies, by uridylylation and deuridylylation, the PII regulatory proteins (GlnB and homologs), in response to the nitrogen status of the cell that GlnD senses through the glutamine level. Under low glutamine levels, catalyzes the conversion of the PII proteins and UTP to PII-UMP and PPi, while under higher glutamine levels, GlnD hydrolyzes PII-UMP to PII and UMP (deuridylylation). Thus, controls uridylylation state and activity of the PII proteins, and plays an important role in the regulation of nitrogen assimilation and metabolism. The chain is Bifunctional uridylyltransferase/uridylyl-removing enzyme from Phenylobacterium zucineum (strain HLK1).